The following is a 1334-amino-acid chain: CRISPR-associated endonuclease Cas9 (1334 aa).

The active-site For RuvC-like nuclease domain is Asp-10. Mn(2+)-binding residues include Asp-10, Glu-765, and Glu-769. Positions 773-924 (TGKGKNNSRP…DKARFIHRQL (152 aa)) constitute an HNH Cas9-type domain. His-843 serves as the catalytic Proton acceptor for HNH nuclease domain. His-986 contributes to the Mn(2+) binding site.

The protein belongs to the CRISPR-associated protein Cas9 family. Subtype II-A subfamily. Monomer. Binds crRNA and tracrRNA. Mg(2+) is required as a cofactor.

Functionally, CRISPR (clustered regularly interspaced short palindromic repeat) is an adaptive immune system that provides protection against mobile genetic elements (viruses, transposable elements and conjugative plasmids). CRISPR clusters contain spacers, sequences complementary to antecedent mobile elements, and target invading nucleic acids. CRISPR clusters are transcribed and processed into CRISPR RNA (crRNA). In type II CRISPR systems correct processing of pre-crRNA requires a trans-encoded small RNA (tracrRNA), endogenous ribonuclease 3 (rnc) and this protein. The tracrRNA serves as a guide for ribonuclease 3-aided processing of pre-crRNA. Subsequently Cas9/crRNA/tracrRNA endonucleolytically cleaves linear or circular dsDNA target complementary to the spacer; Cas9 is inactive in the absence of the 2 guide RNAs (gRNA). Cas9 recognizes the protospacer adjacent motif (PAM) in the CRISPR repeat sequences to help distinguish self versus nonself, as targets within the bacterial CRISPR locus do not have PAMs. PAM recognition is also required for catalytic activity. In Listeria innocua serovar 6a (strain ATCC BAA-680 / CLIP 11262), this protein is CRISPR-associated endonuclease Cas9.